Reading from the N-terminus, the 306-residue chain is Phosphatidylserine decarboxylase proenzyme (306 aa).

Residues Asp98, His155, and Ser259 each act as charge relay system; for autoendoproteolytic cleavage activity in the active site. Ser259 acts as the Schiff-base intermediate with substrate; via pyruvic acid; for decarboxylase activity in catalysis. Ser259 is subject to Pyruvic acid (Ser); by autocatalysis.

The protein belongs to the phosphatidylserine decarboxylase family. PSD-B subfamily. Prokaryotic type I sub-subfamily. In terms of assembly, heterodimer of a large membrane-associated beta subunit and a small pyruvoyl-containing alpha subunit. Pyruvate serves as cofactor. Post-translationally, is synthesized initially as an inactive proenzyme. Formation of the active enzyme involves a self-maturation process in which the active site pyruvoyl group is generated from an internal serine residue via an autocatalytic post-translational modification. Two non-identical subunits are generated from the proenzyme in this reaction, and the pyruvate is formed at the N-terminus of the alpha chain, which is derived from the carboxyl end of the proenzyme. The autoendoproteolytic cleavage occurs by a canonical serine protease mechanism, in which the side chain hydroxyl group of the serine supplies its oxygen atom to form the C-terminus of the beta chain, while the remainder of the serine residue undergoes an oxidative deamination to produce ammonia and the pyruvoyl prosthetic group on the alpha chain. During this reaction, the Ser that is part of the protease active site of the proenzyme becomes the pyruvoyl prosthetic group, which constitutes an essential element of the active site of the mature decarboxylase.

The protein resides in the cell membrane. It catalyses the reaction a 1,2-diacyl-sn-glycero-3-phospho-L-serine + H(+) = a 1,2-diacyl-sn-glycero-3-phosphoethanolamine + CO2. The protein operates within phospholipid metabolism; phosphatidylethanolamine biosynthesis; phosphatidylethanolamine from CDP-diacylglycerol: step 2/2. Catalyzes the formation of phosphatidylethanolamine (PtdEtn) from phosphatidylserine (PtdSer). This chain is Phosphatidylserine decarboxylase proenzyme, found in Nitrosococcus oceani (strain ATCC 19707 / BCRC 17464 / JCM 30415 / NCIMB 11848 / C-107).